The chain runs to 824 residues: MKEYRPQEIEKKWQEVWEEKKVFYTPQRSEKPKYYALVMFPYPSGTLHVGHVKNYVIGDIVARYKRMRGYNVLHPFGYDAFGLPAENAAIEKGIHPEEWTRKNINTIRGQVKKLGISYDWSREIATCDEEYYKWTQWIFLQLYKNGLAYKKKAAVNWCPKCKTVLANEQVKDGKCERCGTSVTIRHLEQWFFKITDYAERLLNDLDKLTGWPEHVKTMQRNWIGKSTGAEIDFPVEGSDTKIRVFTTRPDTLWGVTFMALAPESPLVEELVLEEKKEDLQEFLERVKQQDRFRRTSVEAEKEGFFLGRYAINPVTGERIPIYVANYILMEYGTGAIMGVPAHDQRDFSFAKKYGIPIKVVIKPADRDLDPEKMEEAYEGEGIMVNSGPFDGTPSSEGIEKVINWLEEKGIGKRSVQYKLRDWLISRQRYWGAPIPIIYCEKCGVVPVPEEDLPVRLPKDVEFLPTGQSPLSFHEGFKRTKCPICGGEAQRETDTMDTFVDSSWYFLRYVNPHLEDKPFEPDDVNYWLPVDQYIGGVEHAVLHLLYSRFVTKVLHDLGYLNFDEPFTNLFTQGMIYKDGAKMSKSKGNVVSPDEMIEKYGADTLRMYILFMAPPEKDAEWSDAGIEGVHRFIKRLWNTFYTVLPFVKEENTENLVLKNSTEKELRRKLHSIIKKITEDIEGGFKFNTAISGLMELVNHLSQYLNSVPQEEWNRKLLREIVEKLTLALSPFAPHLAEEFWHDLGNDSLVVQQAWPSYDPKALEVEEVEIAIQINGKVRDKVVVPVDISEEALKRIVLERERVKEYVDGKPIRKFIYVKGRIVNIVV.

The short motif at 41-51 is the 'HIGH' region element; sequence PYPSGTLHVGH. A 'KMSKS' region motif is present at residues 580 to 584; sequence KMSKS. Lys583 contributes to the ATP binding site.

Belongs to the class-I aminoacyl-tRNA synthetase family.

The protein localises to the cytoplasm. It carries out the reaction tRNA(Leu) + L-leucine + ATP = L-leucyl-tRNA(Leu) + AMP + diphosphate. The sequence is that of Leucine--tRNA ligase from Thermotoga petrophila (strain ATCC BAA-488 / DSM 13995 / JCM 10881 / RKU-1).